A 544-amino-acid chain; its full sequence is Carboxypeptidase Y homolog A (544 aa).

Residues Met1–Gly17 form the signal peptide. Residues Pro18–Lys124 constitute a propeptide that is removed on maturation. Intrachain disulfides connect Cys178–Cys417, Cys312–Cys326, Cys336–Cys359, Cys343–Cys352, and Cys381–Cys387. An N-linked (GlcNAc...) asparagine glycan is attached at Asn209. Residue Ser265 is part of the active site. Asp456 is an active-site residue. N-linked (GlcNAc...) asparagine glycosylation occurs at Asn506. Residue His517 is part of the active site.

It belongs to the peptidase S10 family.

The protein resides in the vacuole. It carries out the reaction Release of a C-terminal amino acid with broad specificity.. Vacuolar carboxypeptidase involved in degradation of small peptides. Digests preferentially peptides containing an aliphatic or hydrophobic residue in P1' position, as well as methionine, leucine or phenylalanine in P1 position of ester substrate. The protein is Carboxypeptidase Y homolog A (CPYA) of Ajellomyces capsulatus (strain G186AR / H82 / ATCC MYA-2454 / RMSCC 2432) (Darling's disease fungus).